A 39-amino-acid chain; its full sequence is Mu-like prophage FluMu protein com (39 aa).

This sequence belongs to the com family.

In Haemophilus influenzae (strain ATCC 51907 / DSM 11121 / KW20 / Rd), this protein is Mu-like prophage FluMu protein com.